We begin with the raw amino-acid sequence, 159 residues long: S-ribosylhomocysteine lyase (159 aa).

The Fe cation site is built by H53, H57, and C124.

Belongs to the LuxS family. In terms of assembly, homodimer. It depends on Fe cation as a cofactor.

It carries out the reaction S-(5-deoxy-D-ribos-5-yl)-L-homocysteine = (S)-4,5-dihydroxypentane-2,3-dione + L-homocysteine. Its function is as follows. Involved in the synthesis of autoinducer 2 (AI-2) which is secreted by bacteria and is used to communicate both the cell density and the metabolic potential of the environment. The regulation of gene expression in response to changes in cell density is called quorum sensing. Catalyzes the transformation of S-ribosylhomocysteine (RHC) to homocysteine (HC) and 4,5-dihydroxy-2,3-pentadione (DPD). The chain is S-ribosylhomocysteine lyase from Clostridium beijerinckii (strain ATCC 51743 / NCIMB 8052) (Clostridium acetobutylicum).